The sequence spans 205 residues: Outer-membrane lipoprotein LolB (205 aa).

An N-terminal signal peptide occupies residues 1–17 (MFLRHCITFTMIALLAG). Cys18 is lipidated: N-palmitoyl cysteine. The S-diacylglycerol cysteine moiety is linked to residue Cys18.

The protein belongs to the LolB family. As to quaternary structure, monomer.

It localises to the cell outer membrane. In terms of biological role, plays a critical role in the incorporation of lipoproteins in the outer membrane after they are released by the LolA protein. This is Outer-membrane lipoprotein LolB from Pseudomonas putida (strain ATCC 700007 / DSM 6899 / JCM 31910 / BCRC 17059 / LMG 24140 / F1).